The sequence spans 491 residues: uncharacterized protein (491 aa).

The next 12 helical transmembrane spans lie at 48–68, 85–105, 112–132, 140–160, 174–194, 202–222, 277–297, 317–337, 358–378, 383–403, 408–428, and 455–475; these read LILV…VAPC, ALIL…SAPL, RMLL…CGLA, IFRF…SGTI, AVMS…SGFI, WIFW…LPLL, PIVI…YLVL, LNYI…GIFI, VPVI…YGWT, THWI…MLGW, TYLI…ACCV, and LLAF…WFGG.

This sequence belongs to the major facilitator superfamily.

It is found in the membrane. This is an uncharacterized protein from Schizosaccharomyces pombe (strain 972 / ATCC 24843) (Fission yeast).